Consider the following 165-residue polypeptide: Cytochrome c-type biogenesis protein CcmE (165 aa).

The Cytoplasmic segment spans residues Met-1 to Arg-29. The chain crosses the membrane as a helical; Signal-anchor for type II membrane protein span at residues Leu-30–Ala-50. Over Phe-51–Lys-165 the chain is Periplasmic. Heme-binding residues include His-143 and Tyr-147.

The protein belongs to the CcmE/CycJ family.

It is found in the cell inner membrane. Heme chaperone required for the biogenesis of c-type cytochromes. Transiently binds heme delivered by CcmC and transfers the heme to apo-cytochromes in a process facilitated by CcmF and CcmH. The polypeptide is Cytochrome c-type biogenesis protein CcmE (Brucella anthropi (strain ATCC 49188 / DSM 6882 / CCUG 24695 / JCM 21032 / LMG 3331 / NBRC 15819 / NCTC 12168 / Alc 37) (Ochrobactrum anthropi)).